Here is a 754-residue protein sequence, read N- to C-terminus: tRNA 5-methylaminomethyl-2-thiouridine biosynthesis bifunctional protein MnmC (754 aa).

The tRNA (mnm(5)s(2)U34)-methyltransferase stretch occupies residues 1–320; sequence MPSCYEHSAQ…RRQAVNNSDS (320 aa). Positions 324-754 are FAD-dependent cmnm(5)s(2)U34 oxidoreductase; the sequence is IGGGIAGACL…RKLLKGKALC (431 aa).

This sequence in the N-terminal section; belongs to the methyltransferase superfamily. tRNA (mnm(5)s(2)U34)-methyltransferase family. The protein in the C-terminal section; belongs to the DAO family. FAD serves as cofactor.

Its subcellular location is the cytoplasm. The enzyme catalyses 5-aminomethyl-2-thiouridine(34) in tRNA + S-adenosyl-L-methionine = 5-methylaminomethyl-2-thiouridine(34) in tRNA + S-adenosyl-L-homocysteine + H(+). Its function is as follows. Catalyzes the last two steps in the biosynthesis of 5-methylaminomethyl-2-thiouridine (mnm(5)s(2)U) at the wobble position (U34) in tRNA. Catalyzes the FAD-dependent demodification of cmnm(5)s(2)U34 to nm(5)s(2)U34, followed by the transfer of a methyl group from S-adenosyl-L-methionine to nm(5)s(2)U34, to form mnm(5)s(2)U34. In Shewanella denitrificans (strain OS217 / ATCC BAA-1090 / DSM 15013), this protein is tRNA 5-methylaminomethyl-2-thiouridine biosynthesis bifunctional protein MnmC.